A 358-amino-acid polypeptide reads, in one-letter code: Trans-enoyl reductase pvhC (358 aa).

48 to 51 (VDSK) provides a ligand contact to NADP(+). A substrate-binding site is contributed by 134–141 (ISFLTSGL). NADP(+) contacts are provided by residues 169 to 172 (SSSC), 192 to 195 (SPHN), Y210, and 257 to 258 (LE). Residue 278–282 (GPSLL) coordinates substrate. 347-348 (VS) contributes to the NADP(+) binding site.

The protein belongs to the zinc-containing alcohol dehydrogenase family. As to quaternary structure, monomer.

It participates in secondary metabolite biosynthesis. Trans-enoyl reductase; part of the gene cluster that mediates the biosynthesis of varicidin A, an antifungal natural product containing a cis-octahydrodecalin core. The PKS module of pvhA together with the enoylreductase pvhC catalyze the formation of the polyketide unit which is then conjugated to L-isoleucine by the condensation domain of the NRPS module. Activity of the Dieckmann cyclase domain (RED) of pvhA results in release of an acyclic tetramate. The cytochrome P450 monooxygenase pvhE then catalyzes the oxidation of the C21 methyl group to a to carboxylate group. The methyltransferase pvhD then further methylates the pvhE product. The Diels-Alderase pvhB is able to catalyze Diels-Alder cycloaddition using both pvhE and pvhD products as substrates to form the decalin ring, yielding varicidin B and A, respectively. The chain is Trans-enoyl reductase pvhC from Talaromyces variabilis (Penicillium variabile).